We begin with the raw amino-acid sequence, 383 residues long: Na(+)/H(+) antiporter NhaA (383 aa).

Helical transmembrane passes span 10–30 (LIGGLILFSAALLAIVVNNSP), 56–76 (LMHWINDGLMAIYFLYIGLEI), 91–111 (IITPAIAAFAGLAMPSLIYLS), 121–141 (GWAIPSATDIAFTLAILALLG), 150–170 (LLVITIAIFDDIAAIAIIAIF), 174–194 (SLSLLSLSLGTLFILAMIICN), 206–226 (VVLGFFAWFCTIKSGVHATLA), 254–274 (PWIIYFILPVFAFANAGISFS), 289–308 (IIWGLFVGKQLGIFSILAVF), 327–347 (GISLLCGIGFTMSLFIGVLAF), and 355–375 (AIKIGVVVGSVLSGFFGYIVL).

Belongs to the NhaA Na(+)/H(+) (TC 2.A.33) antiporter family.

Its subcellular location is the cell inner membrane. The catalysed reaction is Na(+)(in) + 2 H(+)(out) = Na(+)(out) + 2 H(+)(in). Na(+)/H(+) antiporter that extrudes sodium in exchange for external protons. This is Na(+)/H(+) antiporter NhaA from Francisella tularensis subsp. tularensis (strain WY96-3418).